Reading from the N-terminus, the 196-residue chain is uncharacterized protein (196 aa).

Residues 71–87 form a helical membrane-spanning segment; sequence YVKLIGTGCYVAILISG.

The protein localises to the membrane. This is an uncharacterized protein from Dictyostelium discoideum (Social amoeba).